Reading from the N-terminus, the 124-residue chain is Fluoride-specific ion channel FluC 2 (124 aa).

Transmembrane regions (helical) follow at residues 1 to 21 (MSDI…RFQI), 34 to 54 (FLIL…LSLV), 66 to 86 (LILF…SFVY), and 103 to 123 (LFII…FLGT). Positions 76 and 79 each coordinate Na(+).

This sequence belongs to the fluoride channel Fluc/FEX (TC 1.A.43) family.

It localises to the cell inner membrane. The enzyme catalyses fluoride(in) = fluoride(out). With respect to regulation, na(+) is not transported, but it plays an essential structural role and its presence is essential for fluoride channel function. Functionally, fluoride-specific ion channel. Important for reducing fluoride concentration in the cell, thus reducing its toxicity. The sequence is that of Fluoride-specific ion channel FluC 2 from Prochlorococcus marinus (strain NATL2A).